Consider the following 513-residue polypeptide: uncharacterized protein (513 aa).

The next 5 helical transmembrane spans lie at 262–282, 304–324, 341–361, 382–402, and 429–449; these read FAIFTDNTPFVLTGPITFWQL, YMFLFVALYLPAIYVAVITYH, EPIPFPAIIEALIMEISFEAL, LVIGTAAVEAGIVSAPMVIIV, and MFLASIFGIFGIMLGTIILVL. Residues 489 to 513 are disordered; the sequence is PGTYSRGNGQKGAKREDPKDEENNI. Over residues 501–513 the composition is skewed to basic and acidic residues; it reads AKREDPKDEENNI.

It belongs to the GerABKA family.

It is found in the cell membrane. This is an uncharacterized protein from Bacillus subtilis (strain 168).